Consider the following 347-residue polypeptide: CCN family member 2 (347 aa).

A signal peptide spans 1–24 (MLASVAGPVSLALVLLLCTRPATG). An IGFBP N-terminal domain is found at 25–96 (QDCSAQCQCA…NRKIGVCTAK (72 aa)). Cystine bridges form between Cys27-Cys52, Cys31-Cys54, Cys33-Cys55, Cys41-Cys58, Cys66-Cys80, and Cys72-Cys93. Residues 99-165 (APCVFGGSVY…GKCCEEWVCD (67 aa)) enclose the VWFC domain. The TSP type-1 domain occupies 196 to 241 (NCLVQTTEWSACSKTCGMGISTRVTNDNTFCRLEKQSRLCMVRPCE). A heparin-binding region spans residues 245–347 (EENIKKGKKC…YYRKMYGDMA (103 aa)). 5 disulfide bridges follow: Cys254-Cys291, Cys271-Cys305, Cys282-Cys321, Cys285-Cys323, and Cys290-Cys327. One can recognise a CTCK domain in the interval 254-328 (CIRTPKIAKP…KTCACHYNCP (75 aa)).

The protein belongs to the CCN family. Monomer. Interacts with TSKU.

The protein resides in the secreted. It is found in the extracellular space. It localises to the extracellular matrix. In terms of biological role, major connective tissue mitoattractant secreted by vascular endothelial cells. Promotes proliferation and differentiation of chondrocytes. Is involved in the stimulation of osteoblast differentiation and has a critical role in osteogenesis. Mediates heparin- and divalent cation-dependent cell adhesion in many cell types including fibroblasts, myofibroblasts, endothelial and epithelial cells. Enhances fibroblast growth factor-induced DNA synthesis. The protein is CCN family member 2 of Rattus norvegicus (Rat).